A 229-amino-acid polypeptide reads, in one-letter code: Large ribosomal subunit protein uL1 (229 aa).

The protein belongs to the universal ribosomal protein uL1 family. In terms of assembly, part of the 50S ribosomal subunit.

In terms of biological role, binds directly to 23S rRNA. The L1 stalk is quite mobile in the ribosome, and is involved in E site tRNA release. Protein L1 is also a translational repressor protein, it controls the translation of the L11 operon by binding to its mRNA. The sequence is that of Large ribosomal subunit protein uL1 from Flavobacterium psychrophilum (strain ATCC 49511 / DSM 21280 / CIP 103535 / JIP02/86).